The sequence spans 346 residues: Phosphoribosylformylglycinamidine cyclo-ligase (346 aa).

Belongs to the AIR synthase family.

The protein localises to the cytoplasm. The enzyme catalyses 2-formamido-N(1)-(5-O-phospho-beta-D-ribosyl)acetamidine + ATP = 5-amino-1-(5-phospho-beta-D-ribosyl)imidazole + ADP + phosphate + H(+). It participates in purine metabolism; IMP biosynthesis via de novo pathway; 5-amino-1-(5-phospho-D-ribosyl)imidazole from N(2)-formyl-N(1)-(5-phospho-D-ribosyl)glycinamide: step 2/2. In Bacillus anthracis (strain A0248), this protein is Phosphoribosylformylglycinamidine cyclo-ligase.